The following is a 431-amino-acid chain: Phosphoribosylamine--glycine ligase (431 aa).

Residues 108–315 enclose the ATP-grasp domain; it reads KDFLARHEIP…LVLLVEAAFA (208 aa). ATP is bound at residue 134 to 195; it reads LQEKGAPIVI…EEFLDGEEAS (62 aa). Residues E285 and N287 each coordinate Mg(2+).

This sequence belongs to the GARS family. The cofactor is Mg(2+). It depends on Mn(2+) as a cofactor.

The enzyme catalyses 5-phospho-beta-D-ribosylamine + glycine + ATP = N(1)-(5-phospho-beta-D-ribosyl)glycinamide + ADP + phosphate + H(+). Its pathway is purine metabolism; IMP biosynthesis via de novo pathway; N(1)-(5-phospho-D-ribosyl)glycinamide from 5-phospho-alpha-D-ribose 1-diphosphate: step 2/2. The polypeptide is Phosphoribosylamine--glycine ligase (Pseudomonas putida (strain ATCC 47054 / DSM 6125 / CFBP 8728 / NCIMB 11950 / KT2440)).